The sequence spans 182 residues: ATP synthase subunit delta (182 aa).

Belongs to the ATPase delta chain family. In terms of assembly, F-type ATPases have 2 components, F(1) - the catalytic core - and F(0) - the membrane proton channel. F(1) has five subunits: alpha(3), beta(3), gamma(1), delta(1), epsilon(1). F(0) has three main subunits: a(1), b(2) and c(10-14). The alpha and beta chains form an alternating ring which encloses part of the gamma chain. F(1) is attached to F(0) by a central stalk formed by the gamma and epsilon chains, while a peripheral stalk is formed by the delta and b chains.

It localises to the cell inner membrane. In terms of biological role, f(1)F(0) ATP synthase produces ATP from ADP in the presence of a proton or sodium gradient. F-type ATPases consist of two structural domains, F(1) containing the extramembraneous catalytic core and F(0) containing the membrane proton channel, linked together by a central stalk and a peripheral stalk. During catalysis, ATP synthesis in the catalytic domain of F(1) is coupled via a rotary mechanism of the central stalk subunits to proton translocation. This protein is part of the stalk that links CF(0) to CF(1). It either transmits conformational changes from CF(0) to CF(1) or is implicated in proton conduction. The sequence is that of ATP synthase subunit delta from Myxococcus xanthus (strain DK1622).